The following is a 193-amino-acid chain: Oligoribonuclease (193 aa).

One can recognise an Exonuclease domain in the interval 8–171 (LVWLDLEMTG…EDIRESVAEL (164 aa)). Residue tyrosine 129 is part of the active site.

It belongs to the oligoribonuclease family.

The protein localises to the cytoplasm. 3'-to-5' exoribonuclease specific for small oligoribonucleotides. The chain is Oligoribonuclease from Alkalilimnicola ehrlichii (strain ATCC BAA-1101 / DSM 17681 / MLHE-1).